The following is a 238-amino-acid chain: Putative pectate lyase X (238 aa).

The first 22 residues, 1–22 (MKYLLPTAAAGLLLLAAQPAMA), serve as a signal peptide directing secretion. Ca(2+) is bound by residues Asp-153, Glu-188, and Asp-192.

Belongs to the polysaccharide lyase 1 family. The cofactor is Ca(2+).

The enzyme catalyses Eliminative cleavage of (1-&gt;4)-alpha-D-galacturonan to give oligosaccharides with 4-deoxy-alpha-D-galact-4-enuronosyl groups at their non-reducing ends.. Its pathway is glycan metabolism; pectin degradation; 2-dehydro-3-deoxy-D-gluconate from pectin: step 2/5. Its function is as follows. Involved in maceration and soft-rotting of plant tissue. In Pectobacterium carotovorum (Erwinia carotovora), this protein is Putative pectate lyase X (PEL X).